The chain runs to 420 residues: Tyrosine--tRNA ligase (420 aa).

Tyr33 lines the L-tyrosine pocket. The 'HIGH' region motif lies at 38–47 (PTADSLHIGH). L-tyrosine is bound by residues Tyr168 and Gln172. Residues 231-235 (KFGKT) carry the 'KMSKS' region motif. Residue Lys234 coordinates ATP. Residues 353-419 (MLLVDALIKV…GKKNYYLVKL (67 aa)) form the S4 RNA-binding domain.

Belongs to the class-I aminoacyl-tRNA synthetase family. TyrS type 1 subfamily. Homodimer.

The protein resides in the cytoplasm. The enzyme catalyses tRNA(Tyr) + L-tyrosine + ATP = L-tyrosyl-tRNA(Tyr) + AMP + diphosphate + H(+). Its function is as follows. Catalyzes the attachment of tyrosine to tRNA(Tyr) in a two-step reaction: tyrosine is first activated by ATP to form Tyr-AMP and then transferred to the acceptor end of tRNA(Tyr). In Desulfitobacterium hafniense (strain DSM 10664 / DCB-2), this protein is Tyrosine--tRNA ligase.